We begin with the raw amino-acid sequence, 168 residues long: Inorganic pyrophosphatase (168 aa).

Residues Lys-23, Arg-37, and Tyr-49 each coordinate substrate. Mg(2+) contacts are provided by Asp-59, Asp-64, and Asp-96. A substrate-binding site is contributed by Tyr-133.

The protein belongs to the PPase family. In terms of assembly, homohexamer. Mg(2+) serves as cofactor.

Its subcellular location is the cytoplasm. The catalysed reaction is diphosphate + H2O = 2 phosphate + H(+). Catalyzes the hydrolysis of inorganic pyrophosphate (PPi) forming two phosphate ions. This chain is Inorganic pyrophosphatase, found in Methanosarcina acetivorans (strain ATCC 35395 / DSM 2834 / JCM 12185 / C2A).